Consider the following 274-residue polypeptide: Cytochrome b-c1 complex subunit Rieske, mitochondrial (274 aa).

At 79–103 (SHTDIKVPDFSEYRRLEVLDSTKSS) the chain is on the mitochondrial matrix side. Residues 104–140 (RESSEARKGFSYLVTGVTTVGVAYAAKNAVTQFVSSM) form a helical membrane-spanning segment. Residues 141 to 274 (SASADVLALA…FTSDDMVIVG (134 aa)) are Mitochondrial intermembrane-facing. One can recognise a Rieske domain in the interval 187 to 272 (EAAVELSQLR…YEFTSDDMVI (86 aa)). The [2Fe-2S] cluster site is built by C217, H219, C236, H239, and S241. C222 and C238 are joined by a disulfide.

Belongs to the Rieske iron-sulfur protein family. Component of the ubiquinol-cytochrome c oxidoreductase (cytochrome b-c1 complex, complex III, CIII), a multisubunit enzyme composed of 11 subunits. The complex is composed of 3 respiratory subunits cytochrome b, cytochrome c1 and Rieske protein UQCRFS1, 2 core protein subunits UQCRC1/QCR1 and UQCRC2/QCR2, and 6 low-molecular weight protein subunits UQCRH/QCR6, UQCRB/QCR7, UQCRQ/QCR8, UQCR10/QCR9, UQCR11/QCR10 and subunit 9, the cleavage product of Rieske protein UQCRFS1. The complex exists as an obligatory dimer and forms supercomplexes (SCs) in the inner mitochondrial membrane with NADH-ubiquinone oxidoreductase (complex I, CI) and cytochrome c oxidase (complex IV, CIV), resulting in different assemblies (supercomplex SCI(1)III(2)IV(1) and megacomplex MCI(2)III(2)IV(2)). Incorporation of the Rieske protein UQCRFS1 is the penultimate step in complex III assembly. Interacts with TTC19, which is involved in the clearance of UQCRFS1 fragments. As to quaternary structure, component of the ubiquinol-cytochrome c oxidoreductase (cytochrome b-c1 complex, complex III, CIII). Subunit 9 corresponds to the mitochondrial targeting sequence (MTS) of Rieske protein UQCRFS1. It is retained after processing and incorporated inside complex III, where it remains bound to the complex and localizes between the 2 core subunits UQCRC1/QCR1 and UQCRC2/QCR2. [2Fe-2S] cluster is required as a cofactor. Proteolytic processing is necessary for the correct insertion of UQCRFS1 in the complex III dimer. Several fragments are generated during UQCRFS1 insertion, most probably due to the endogenous matrix-processing peptidase (MPP) activity of the 2 core protein subunits UQCRC1/QCR1 and UQCRC2/QCR2, which are homologous to the 2 mitochondrial-processing peptidase (MPP) subunits beta-MPP and alpha-MPP respectively. The action of the protease is also necessary for the clearance of the UQCRFS1 fragments.

It is found in the mitochondrion inner membrane. The catalysed reaction is a quinol + 2 Fe(III)-[cytochrome c](out) = a quinone + 2 Fe(II)-[cytochrome c](out) + 2 H(+)(out). Component of the ubiquinol-cytochrome c oxidoreductase, a multisubunit transmembrane complex that is part of the mitochondrial electron transport chain which drives oxidative phosphorylation. The respiratory chain contains 3 multisubunit complexes succinate dehydrogenase (complex II, CII), ubiquinol-cytochrome c oxidoreductase (cytochrome b-c1 complex, complex III, CIII) and cytochrome c oxidase (complex IV, CIV), that cooperate to transfer electrons derived from NADH and succinate to molecular oxygen, creating an electrochemical gradient over the inner membrane that drives transmembrane transport and the ATP synthase. The cytochrome b-c1 complex catalyzes electron transfer from ubiquinol to cytochrome c, linking this redox reaction to translocation of protons across the mitochondrial inner membrane, with protons being carried across the membrane as hydrogens on the quinol. In the process called Q cycle, 2 protons are consumed from the matrix, 4 protons are released into the intermembrane space and 2 electrons are passed to cytochrome c. The Rieske protein is a catalytic core subunit containing a [2Fe-2S] iron-sulfur cluster. It cycles between 2 conformational states during catalysis to transfer electrons from the quinol bound in the Q(0) site in cytochrome b to cytochrome c1. Incorporation of UQCRFS1 is the penultimate step in complex III assembly. In terms of biological role, component of the ubiquinol-cytochrome c oxidoreductase (cytochrome b-c1 complex, complex III, CIII). UQCRFS1 undergoes proteolytic processing once it is incorporated in the complex III dimer. One of the fragments, called subunit 9, corresponds to its mitochondrial targeting sequence (MTS). The proteolytic processing is necessary for the correct insertion of UQCRFS1 in the complex III dimer, but the persistence of UQCRFS1-derived fragments may prevent newly imported UQCRFS1 to be processed and assembled into complex III and is detrimental for the complex III structure and function. This is Cytochrome b-c1 complex subunit Rieske, mitochondrial (UQCRFS1) from Gorilla gorilla gorilla (Western lowland gorilla).